A 539-amino-acid polypeptide reads, in one-letter code: Alpha-copaene synthase (539 aa).

Mg(2+) contacts are provided by Asp290 and Asp294. Residues Asp290, Asp294, and Arg432 each contribute to the substrate site. Positions 290-294 match the DDXXD motif motif; it reads DDTFD.

It belongs to the terpene synthase family. In terms of assembly, monomer. Mg(2+) is required as a cofactor. The cofactor is Mn(2+).

The protein localises to the cytoplasm. The catalysed reaction is (2E,6E)-farnesyl diphosphate = alpha-copaene + diphosphate. The enzyme catalyses (2E,6E)-farnesyl diphosphate = (+)-germacrene D + diphosphate. It carries out the reaction (2E,6E)-farnesyl diphosphate = (-)-(E)-beta-caryophyllene + diphosphate. It catalyses the reaction (2E,6E)-farnesyl diphosphate = delta-cadinene + diphosphate. Its pathway is secondary metabolite biosynthesis; terpenoid biosynthesis. Its function is as follows. Converts farnesyl diphosphate to the bicyclic olefins alpha-copaene, (E)-beta-caryophyllene, and to the macrocyclic sesquiterpene germacrene D. Also mediates the biosynthesis of minor sesquiterpene hydrocarbons including delta-cadinene. Involved in indirect defense by producing volatile signals attracting natural enemies of herbivores. This Zea mays (Maize) protein is Alpha-copaene synthase.